The primary structure comprises 377 residues: O-phospho-L-seryl-tRNA:Cys-tRNA synthase (377 aa).

Pyridoxal 5'-phosphate is bound by residues 83–84, Asn188, and 211–213; these read AR and SGH. Lys214 carries the N6-(pyridoxal phosphate)lysine modification.

It belongs to the SepCysS family. As to quaternary structure, homodimer. Interacts with SepRS. Pyridoxal 5'-phosphate serves as cofactor.

It carries out the reaction O-phospho-L-seryl-tRNA(Cys) + hydrogen sulfide + H(+) = L-cysteinyl-tRNA(Cys) + phosphate. Functionally, converts O-phospho-L-seryl-tRNA(Cys) (Sep-tRNA(Cys)) to L-cysteinyl-tRNA(Cys) (Cys-tRNA(Cys)). In Methanothermobacter thermautotrophicus (strain ATCC 29096 / DSM 1053 / JCM 10044 / NBRC 100330 / Delta H) (Methanobacterium thermoautotrophicum), this protein is O-phospho-L-seryl-tRNA:Cys-tRNA synthase.